The primary structure comprises 528 residues: Protein spinster homolog 1 (528 aa).

The tract at residues 1–38 is disordered; that stretch reads MAGSDTAPFLSQADDPDDGPAPGHPGLPGPMGNPKSGE. Ala-2 bears the N-acetylalanine mark. 12 consecutive transmembrane segments (helical) span residues 60–80, 98–118, 126–146, 160–180, 187–207, 218–238, 278–298, 323–343, 357–377, 381–401, 421–441, and 465–485; these read LIVVVLCYINLLNYMDRFTVA, GLIQTVFISSYMVLAPVFGYL, YLMCGGIAFWSLVTLGSSFIP, VGVGEASYSTIAPTLIADLFV, MLSIFYFAIPVGSGLGYIAGS, WALRVTPGLGVLAVLLLFLVV, LGFTSVAFVTGSLALWAPAFL, LIFGLITCLTGVLGVGLGVEI, LVCAAGLLGSAPFLFLALACA, IVATYIFIFIGETLLSMNWAI, FQIVLSHLLGDAGSPYLIGLI, and MLCAFVGALGGAAFLGTAMFI. Ser-518 carries the post-translational modification Phosphoserine.

This sequence belongs to the major facilitator superfamily. Spinster (TC 2.A.1.49) family. In terms of assembly, interacts with BCL2 and BCL2L1. Expressed in liver (at mRNA and protein levels).

It is found in the lysosome membrane. The catalysed reaction is a 1-acyl-sn-glycero-3-phosphocholine(out) + H(+)(out) = a 1-acyl-sn-glycero-3-phosphocholine(in) + H(+)(in). It catalyses the reaction 1-hexadecanoyl-sn-glycero-3-phosphocholine(out) + H(+)(out) = 1-hexadecanoyl-sn-glycero-3-phosphocholine(in) + H(+)(in). It carries out the reaction 1-(9Z-octadecenoyl)-sn-glycero-3-phosphocholine(out) + H(+)(out) = 1-(9Z-octadecenoyl)-sn-glycero-3-phosphocholine(in) + H(+)(in). The enzyme catalyses 1-(5Z,8Z,11Z,14Z-eicosatetraenoyl)-sn-glycero-3-phosphocholine(out) + H(+)(out) = 1-(5Z,8Z,11Z,14Z-eicosatetraenoyl)-sn-glycero-3-phosphocholine(in) + H(+)(in). The catalysed reaction is 1-(4Z,7Z,10Z,13Z,16Z,19Z-docosahexaenoyl)-sn-glycero-3-phosphocholine(out) + H(+)(out) = 1-(4Z,7Z,10Z,13Z,16Z,19Z-docosahexaenoyl)-sn-glycero-3-phosphocholine(in) + H(+)(in). It catalyses the reaction a 1-acyl-sn-glycero-3-phosphoethanolamine(out) + H(+)(out) = a 1-acyl-sn-glycero-3-phosphoethanolamine(in) + H(+)(in). It carries out the reaction 1-(9Z-octadecenoyl)-sn-glycero-3-phosphoethanolamine(out) + H(+)(out) = 1-(9Z-octadecenoyl)-sn-glycero-3-phosphoethanolamine(in) + H(+)(in). The enzyme catalyses 1-acyl-sn-glycero-3-phospho-(1'-sn-glycerol)(out) + H(+)(out) = 1-acyl-sn-glycero-3-phospho-(1'-sn-glycerol)(in) + H(+)(in). The catalysed reaction is 1-(9Z-octadecenoyl)-sn-glycero-3-phospho-(1'-sn-glycerol)(out) + H(+)(out) = 1-(9Z-octadecenoyl)-sn-glycero-3-phospho-(1'-sn-glycerol)(in) + H(+)(in). It catalyses the reaction a 1-O-(1Z-alkenyl)-sn-glycero-3-phosphocholine(out) + H(+)(out) = a 1-O-(1Z-alkenyl)-sn-glycero-3-phosphocholine(in) + H(+)(in). It carries out the reaction 1-(1Z-hexadecenyl)-sn-glycero-3-phosphocholine(out) + H(+)(out) = 1-(1Z-hexadecenyl)-sn-glycero-3-phosphocholine(in) + H(+)(in). The enzyme catalyses a 1-O-(1Z-alkenyl)-sn-glycero-3-phosphoethanolamine(out) + H(+)(out) = a 1-O-(1Z-alkenyl)-sn-glycero-3-phosphoethanolamine(in) + H(+)(in). The catalysed reaction is 1-O-(1Z-hexadecenyl)-sn-glycero-3-phosphoethanolamine(out) + H(+)(out) = 1-O-(1Z-hexadecenyl)-sn-glycero-3-phosphoethanolamine(in) + H(+)(in). Functionally, plays a critical role in the phospholipid salvage pathway from lysosomes to the cytosol. Mediates the rate-limiting, proton-dependent, lysosomal efflux of lysophospholipids, which can then be reacylated by acyltransferases in the endoplasmic reticulum to form phospholipids. Selective for zwitterionic headgroups such as lysophosphatidylcholine (LPC) and lysophosphatidylethanolamine (LPE), can also transport lysophosphatidylglycerol (LPG), but not other anionic lysophospholipids, sphingosine, nor sphingomyelin. Transports lysophospholipids with saturated, monounsaturated, and polyunsaturated fatty acids, such as 1-hexadecanoyl-sn-glycero-3-phosphocholine, 1-(9Z-octadecenoyl)-sn-glycero-3-phosphocholine and 1-(4Z,7Z,10Z,13Z,16Z,19Z-docosahexaenoyl)-sn-glycero-3-phosphocholine, respectively. Can also transport lysoplasmalogen (LPC with a fatty alcohol) such as 1-(1Z-hexadecenyl)-sn-glycero-3-phosphocholine. Essential player in lysosomal homeostasis. Crucial for cell survival under conditions of nutrient limitation. May be involved in necrotic or autophagic cell death. The polypeptide is Protein spinster homolog 1 (Spns1) (Mus musculus (Mouse)).